The following is a 605-amino-acid chain: Anaerobic ribonucleoside-triphosphate reductase (605 aa).

DCTP contacts are provided by H64 and H66. DGTP contacts are provided by H64, H66, D67, E100, and K103. DCTP is bound by residues E100, K103, Q114, K146, and 445–448 (AENL). Residues E100, K103, Q114, and K146 each coordinate dATP. E100 is a dTTP binding site. Positions 114 and 146 each coordinate dTTP. The dGTP site is built by K146, N447, and L448. A Glycine radical domain is found at 482–605 (ENITPFEKIS…KEIMHRVKHQ (124 aa)). The Zn(2+) site is built by C543, C546, C561, and C564. G580 carries the post-translational modification Glycine radical.

It belongs to the anaerobic ribonucleoside-triphosphate reductase family. Homodimer. Forms a tetramer composed of two NrdD and two NrdG subunits.

It carries out the reaction a ribonucleoside 5'-triphosphate + formate + H(+) = a 2'-deoxyribonucleoside 5'-triphosphate + CO2 + H2O. With respect to regulation, activated under anaerobic conditions by NrdG, a tightly associated activase. Activation involves the formation of a glycyl radical at Gly-580. In terms of biological role, catalyzes the conversion of ribonucleotides into deoxyribonucleotides, which are required for DNA synthesis and repair. The polypeptide is Anaerobic ribonucleoside-triphosphate reductase (Enterobacteria phage T4 (Bacteriophage T4)).